Here is a 191-residue protein sequence, read N- to C-terminus: Bcl-2-like protein 10 (191 aa).

The BH1 motif lies at 79-98 (LSKDQDFSWSQLVMLLAFAG). Lys-112 is covalently cross-linked (Glycyl lysine isopeptide (Lys-Gly) (interchain with G-Cter in ubiquitin)). The BH2 motif lies at 144 to 155 (RLEALGGWDGFC). A helical transmembrane segment spans residues 166-183 (FWRRLLIQAFLSGFFATA).

This sequence belongs to the Bcl-2 family. As to quaternary structure, interacts with BAX. Interacts with BCL2 and BCL2L1/BCLX. Interacts with APAF1. Interacts with ITPR1, ITPR2 and ITPR3; the interaction with ITPR1 is increased in the presence of AHCLY1. Interacts with AHCYL1. Interacts with HIP1R (via ENTH and I/LWEQ domains). Interacts with CASP9. Interacts with BCL2L11/BIM. Interacts with BIK. Interacts with UBQLN4. Interacts with NME2/NM23-H2. Interacts with PMAIP1/NOXA. Interacts with TPX2. Interacts with UBQLN1; in the cytoplasm. Interacts (via BH1 domain) with BECN1. Ca(2+) is required as a cofactor. In terms of processing, monoubiquitinated by UBQLN1; results in stabilization of BCL2L10 protein abundance and in relocalization from mitochondria to cytoplasm. In terms of tissue distribution, expressed in multiple embryonic tissues. Restricted to the ovary and testis in adult mice.

The protein resides in the mitochondrion. It is found in the nucleus membrane. It localises to the endoplasmic reticulum. The protein localises to the cytoplasm. Its subcellular location is the cytoskeleton. The protein resides in the spindle. Its function is as follows. Promotes cell survival by suppressing apoptosis induced by BAX but not BAK. Increases binding of AHCYL1/IRBIT to ITPR1. Reduces ITPR1-mediated calcium release from the endoplasmic reticulum cooperatively with AHCYL1/IRBIT under normal cellular conditions. Under apoptotic stress conditions, dissociates from ITPR1 and is displaced from mitochondria-associated endoplasmic reticulum membranes, leading to increased Ca(2+) transfer to mitochondria which promotes apoptosis. Required for the correct formation of the microtubule organizing center during oocyte cell division, potentially via regulation of protein abundance and localization of other microtubule organizing center components such as AURKA and TPX2. This is Bcl-2-like protein 10 from Mus musculus (Mouse).